The following is a 564-amino-acid chain: Protein glycosylation K (564 aa).

At 1 to 15 (MLKKLFFILSKEDKN) the chain is on the cytoplasmic side. The chain crosses the membrane as a helical span at residues 16–38 (FLFFLLVFSVFISFIETFAISLV). An ABC transmembrane type-1 domain is found at 17–319 (LFFLLVFSVF…IITSYHDLLY (303 aa)). Over 39–76 (MPFITLASDFSYFDRNKYLISLKEYLNIPVFEIIVYFG) the chain is Extracellular. Positions 46-67 (SDFSYFDRNKYLISLKEYLNIP) are important for stimulation of ATPase activity by lipid-linked oligosaccharides and subsequent translocation of lipid-linked oligosaccharides. Residues 77–98 (VGLIVFYVFRALLNAYYFHLLA) traverse the membrane as a helical segment. Residues 99–149 (RFSKGRYHAIAYKVFSKFLNINYEKFTQKNQSEILKSITGEVYNLSTMISS) are Cytoplasmic-facing. A helical membrane pass occupies residues 150 to 170 (FLLLMSEIFVVLLLYALMLLI). The Extracellular portion of the chain corresponds to 171-173 (NYK). The helical transmembrane segment at 174-197 (ITLFLSIFMVLNAFILVKILSPII) threads the bilayer. The Cytoplasmic segment spans residues 198–254 (KKAGVRREEAMKNFFEILNTNLNNFKFIKLKTKEDGVLSLFKAQSEAFSKANITNES). Residues 255–276 (VAAVPRIYLEGIGFCVLVFIVV) form a helical membrane-spanning segment. The Extracellular segment spans residues 277-292 (FLVLKNESDISGILST). The helical transmembrane segment at 293–314 (ISIFVLALYRLMPSANRIITSY) threads the bilayer. At 315-564 (HDLLYYHSSL…LEHGKLKEEK (250 aa)) the chain is on the cytoplasmic side. The 216-residue stretch at 349-564 (LKICNLSFGY…LEHGKLKEEK (216 aa)) folds into the ABC transporter domain. 382 to 389 (GESGCGKS) contributes to the ATP binding site.

This sequence belongs to the ABC transporter superfamily. As to quaternary structure, homodimer; domain-swapped. Helices that arise in transmembrane regions 4 and 5 from one subunit cross over and contact the nucleotide-binding domain from the other subunit.

The protein resides in the cell inner membrane. The enzyme catalyses ATP + H2O + lipopolysaccharideSide 1 = ADP + phosphate + lipopolysaccharideSide 2.. It functions in the pathway protein modification; protein glycosylation. Functionally, mediates the ATP-dependent translocation of the undecaprenylpyrophosphate-linked heptasaccharide intermediate across the cell membrane; this is an essential step during the N-linked protein glycosylation pathway. Transport across the membrane is effected via ATP-driven conformation changes. Most likely, only the polar and charged part of the glycolipid enter the substrate-binding cavity, and the lipid tail remains exposed to the membrane lipids during the transmembrane flipping process. The chain is Protein glycosylation K (pglK) from Campylobacter jejuni subsp. jejuni serotype O:2 (strain ATCC 700819 / NCTC 11168).